The following is a 468-amino-acid chain: IQ domain-containing protein C (468 aa).

Residues Leu6–Ala35 form the IQ domain. Disordered stretches follow at residues Asn113–Leu157, Glu202–Pro245, and Ser329–Gly468. Positions Gln139–Pro150 are enriched in basic and acidic residues. Residues Ser415–His426 are compositionally biased toward basic and acidic residues.

The chain is IQ domain-containing protein C (IQCC) from Bos taurus (Bovine).